The following is a 268-amino-acid chain: (+)-cis,trans-nepetalactol synthase NEPS2 (268 aa).

NAD(+) is bound by residues 16-22, 41-43, 65-66, N92, 163-167, and 196-200; these read GGASGIG, DIQ, DI, YVMSK, and VLTPL.

Belongs to the short-chain dehydrogenases/reductases (SDR) family.

It catalyses the reaction (S)-8-oxocitronellyl enol = cis-trans-nepetalactol. Its function is as follows. Functions as a non-oxidoreductive cyclase to promote the formation of cis-trans-nepetalactol. Cis-trans-nepetalactol is then oxidized by NEPS1 into cis-trans-nepetalactone, which belongs to a family of metabolites that are both insect-repellent and have euphoric effect in cats. Binds NAD(+) as classical short-chain dehydrogenase/reductase (SDR), but does not utilize it for its redox-neutral cyclase activity. The sequence is that of (+)-cis,trans-nepetalactol synthase NEPS2 from Nepeta racemosa (Catmint).